The sequence spans 353 residues: Probable G-protein coupled receptor 139 (353 aa).

Over 1 to 29 (MEHTHAHLAANSSLSWWSPGSACGLGFVP) the chain is Extracellular. Asn-11 carries an N-linked (GlcNAc...) asparagine glycan. Residues 30 to 50 (VVYYSLLLCLGLPANILTVII) form a helical membrane-spanning segment. At 51 to 65 (LSQLVARRQKSSYNY) the chain is on the cytoplasmic side. Residues 66-86 (LLALAAADILVLFFIVFVDFL) form a helical membrane-spanning segment. Residues 87 to 102 (LEDFILNMQMPQVPDK) are Extracellular-facing. Residues 103–123 (IIEVLEFSSIHTSIWITVPLT) traverse the membrane as a helical segment. Topologically, residues 124–148 (IDRYIAVCHPLKYHTVSYPARTRKV) are cytoplasmic. A helical transmembrane segment spans residues 149–169 (IVSVYITCFLTSIPYYWWPNI). At 170–181 (WTEDYISTSVHH) the chain is on the extracellular side. The helical transmembrane segment at 182-202 (VLIWIHCFTVYLVPCSIFFIL) threads the bilayer. At 203–228 (NSIIVYKLRRKSNFRLRGYSTGKTTA) the chain is on the cytoplasmic side. A helical membrane pass occupies residues 229–249 (ILFTITSIFATLWAPRIIMIL). Residues 250 to 268 (YHLYGAPIQNRWLVHIMSD) are Extracellular-facing. Residues 269–289 (IANMLALLNTAINFFLYCFIS) form a helical membrane-spanning segment. Residues 290-353 (KRFRTMAAAT…KNGKPIKVSP (64 aa)) are Cytoplasmic-facing.

The protein belongs to the G-protein coupled receptor 1 family. In terms of tissue distribution, expressed almost exclusively in the brain. Detected at very low levels in the peripheral tissues.

Its subcellular location is the cell membrane. Functionally, orphan receptor. Seems to act through a G(q/11)-mediated pathway. This is Probable G-protein coupled receptor 139 (GPR139) from Homo sapiens (Human).